The sequence spans 319 residues: Acetyl-coenzyme A carboxylase carboxyl transferase subunit alpha (319 aa).

The CoA carboxyltransferase C-terminal domain maps to 35 to 296 (NLDEEVQRLR…KAQLLDDLSE (262 aa)).

Belongs to the AccA family. As to quaternary structure, acetyl-CoA carboxylase is a heterohexamer composed of biotin carboxyl carrier protein (AccB), biotin carboxylase (AccC) and two subunits each of ACCase subunit alpha (AccA) and ACCase subunit beta (AccD).

It is found in the cytoplasm. The enzyme catalyses N(6)-carboxybiotinyl-L-lysyl-[protein] + acetyl-CoA = N(6)-biotinyl-L-lysyl-[protein] + malonyl-CoA. The protein operates within lipid metabolism; malonyl-CoA biosynthesis; malonyl-CoA from acetyl-CoA: step 1/1. Its function is as follows. Component of the acetyl coenzyme A carboxylase (ACC) complex. First, biotin carboxylase catalyzes the carboxylation of biotin on its carrier protein (BCCP) and then the CO(2) group is transferred by the carboxyltransferase to acetyl-CoA to form malonyl-CoA. This is Acetyl-coenzyme A carboxylase carboxyl transferase subunit alpha from Sodalis glossinidius (strain morsitans).